A 105-amino-acid polypeptide reads, in one-letter code: Cuticle protein AMP2 (105 aa).

Residues Asp1–Tyr21 form a disordered region. The region spanning Asp16–Pro81 is the Chitin-binding type R&amp;R domain.

In terms of tissue distribution, arthrodial membrane.

The chain is Cuticle protein AMP2 from Homarus americanus (American lobster).